Reading from the N-terminus, the 1430-residue chain is DNA-directed RNA polymerase subunit beta' (1430 aa).

Zn(2+) is bound by residues cysteine 71, cysteine 73, cysteine 86, and cysteine 89. The Mg(2+) site is built by aspartate 461, aspartate 463, and aspartate 465. 4 residues coordinate Zn(2+): cysteine 815, cysteine 889, cysteine 896, and cysteine 899. The segment at 1388 to 1430 (RRQEAPAPAATPEQQAEEVFASLGQGEGEGPSPSDEASGPEVE) is disordered. The span at 1392 to 1405 (APAPAATPEQQAEE) shows a compositional bias: low complexity.

This sequence belongs to the RNA polymerase beta' chain family. In terms of assembly, the RNAP catalytic core consists of 2 alpha, 1 beta, 1 beta' and 1 omega subunit. When a sigma factor is associated with the core the holoenzyme is formed, which can initiate transcription. Requires Mg(2+) as cofactor. Zn(2+) serves as cofactor.

The catalysed reaction is RNA(n) + a ribonucleoside 5'-triphosphate = RNA(n+1) + diphosphate. DNA-dependent RNA polymerase catalyzes the transcription of DNA into RNA using the four ribonucleoside triphosphates as substrates. This Halorhodospira halophila (strain DSM 244 / SL1) (Ectothiorhodospira halophila (strain DSM 244 / SL1)) protein is DNA-directed RNA polymerase subunit beta'.